We begin with the raw amino-acid sequence, 325 residues long: Isoaspartyl peptidase/L-asparaginase (325 aa).

Thr193 (nucleophile) is an active-site residue. Residues 221–224 and 243–246 each bind substrate; these read RIGD and TGKG.

It belongs to the Ntn-hydrolase family. As to quaternary structure, heterotetramer of two alpha and two beta chains arranged as a dimer of alpha/beta heterodimers. In terms of processing, cleaved into an alpha and beta chain by autocatalysis; this activates the enzyme. The N-terminal residue of the beta subunit is responsible for the nucleophile hydrolase activity. As to expression, developing seeds.

The enzyme catalyses Cleavage of a beta-linked Asp residue from the N-terminus of a polypeptide.. Its function is as follows. Acts in asparagine catabolism but also in the final steps of protein degradation via hydrolysis of a range of isoaspartyl dipeptides. In Lupinus angustifolius (Narrow-leaved blue lupine), this protein is Isoaspartyl peptidase/L-asparaginase.